The following is a 197-amino-acid chain: UPF0319 protein VP0761 (197 aa).

The signal sequence occupies residues 1-20 (MKKTTTLLGICAILSAPAFA).

The protein belongs to the UPF0319 family.

In Vibrio parahaemolyticus serotype O3:K6 (strain RIMD 2210633), this protein is UPF0319 protein VP0761.